Reading from the N-terminus, the 288-residue chain is Hydroxyethylthiazole kinase (288 aa).

Methionine 55 provides a ligand contact to substrate. Residues asparagine 131 and serine 177 each contribute to the ATP site. Glycine 204 is a binding site for substrate.

The protein belongs to the Thz kinase family. Mg(2+) is required as a cofactor.

The catalysed reaction is 5-(2-hydroxyethyl)-4-methylthiazole + ATP = 4-methyl-5-(2-phosphooxyethyl)-thiazole + ADP + H(+). It functions in the pathway cofactor biosynthesis; thiamine diphosphate biosynthesis; 4-methyl-5-(2-phosphoethyl)-thiazole from 5-(2-hydroxyethyl)-4-methylthiazole: step 1/1. Catalyzes the phosphorylation of the hydroxyl group of 4-methyl-5-beta-hydroxyethylthiazole (THZ). The polypeptide is Hydroxyethylthiazole kinase (Haloquadratum walsbyi (strain DSM 16790 / HBSQ001)).